Consider the following 478-residue polypeptide: Chromosomal replication initiator protein DnaA (478 aa).

A domain I, interacts with DnaA modulators region spans residues 1–71; that stretch reads MKEFWQTCVS…EALAAEWFQR (71 aa). A domain II region spans residues 71 to 140; sequence RPVQVAFELP…DAAGVVYERS (70 aa). The domain III, AAA+ region stretch occupies residues 141–357; that stretch reads RLNTDLTFDN…GALRKVLAYA (217 aa). Residues glycine 185, glycine 187, lysine 188, and threonine 189 each coordinate ATP. The tract at residues 358 to 478 is domain IV, binds dsDNA; the sequence is RFHGRDVLSV…LHVLEQTLKG (121 aa).

This sequence belongs to the DnaA family. As to quaternary structure, oligomerizes as a right-handed, spiral filament on DNA at oriC.

Its subcellular location is the cytoplasm. Functionally, plays an essential role in the initiation and regulation of chromosomal replication. ATP-DnaA binds to the origin of replication (oriC) to initiate formation of the DNA replication initiation complex once per cell cycle. Binds the DnaA box (a 9 base pair repeat at the origin) and separates the double-stranded (ds)DNA. Forms a right-handed helical filament on oriC DNA; dsDNA binds to the exterior of the filament while single-stranded (ss)DNA is stabiized in the filament's interior. The ATP-DnaA-oriC complex binds and stabilizes one strand of the AT-rich DNA unwinding element (DUE), permitting loading of DNA polymerase. After initiation quickly degrades to an ADP-DnaA complex that is not apt for DNA replication. Binds acidic phospholipids. The protein is Chromosomal replication initiator protein DnaA of Bordetella petrii (strain ATCC BAA-461 / DSM 12804 / CCUG 43448).